The primary structure comprises 518 residues: Protein nucleotidyltransferase YdiU (518 aa).

ATP contacts are provided by Gly100, Gly102, Arg103, Lys123, Asp135, Gly136, Arg193, and Arg200. Residue Asp270 is the Proton acceptor of the active site. Mg(2+)-binding residues include Asn271 and Asp280. ATP is bound at residue Asp280.

Belongs to the SELO family. The cofactor is Mg(2+). Mn(2+) is required as a cofactor.

It catalyses the reaction L-seryl-[protein] + ATP = 3-O-(5'-adenylyl)-L-seryl-[protein] + diphosphate. It carries out the reaction L-threonyl-[protein] + ATP = 3-O-(5'-adenylyl)-L-threonyl-[protein] + diphosphate. The catalysed reaction is L-tyrosyl-[protein] + ATP = O-(5'-adenylyl)-L-tyrosyl-[protein] + diphosphate. The enzyme catalyses L-histidyl-[protein] + UTP = N(tele)-(5'-uridylyl)-L-histidyl-[protein] + diphosphate. It catalyses the reaction L-seryl-[protein] + UTP = O-(5'-uridylyl)-L-seryl-[protein] + diphosphate. It carries out the reaction L-tyrosyl-[protein] + UTP = O-(5'-uridylyl)-L-tyrosyl-[protein] + diphosphate. Its function is as follows. Nucleotidyltransferase involved in the post-translational modification of proteins. It can catalyze the addition of adenosine monophosphate (AMP) or uridine monophosphate (UMP) to a protein, resulting in modifications known as AMPylation and UMPylation. The chain is Protein nucleotidyltransferase YdiU from Xanthomonas oryzae pv. oryzae (strain MAFF 311018).